A 1268-amino-acid polypeptide reads, in one-letter code: Vigilin (1268 aa).

Ser2 bears the N-acetylserine mark. Thr8 carries the phosphothreonine modification. Ser11, Ser31, and Ser35 each carry phosphoserine. KH domains follow at residues 150–212 (QASA…RHEV), 222–284 (RAVK…VARI), 295–357 (TTTI…LTEV), 364–424 (FTVS…QEQI), 435–497 (MDYV…KREL), 507–570 (ERTK…TKYM), and 581–643 (SYSI…RSRI). 2 positions are modified to phosphothreonine: Thr295 and Thr296. Residue Ser317 is modified to Phosphoserine. Tyr437 carries the post-translational modification Phosphotyrosine. Residue Ser645 is modified to Phosphoserine. KH domains are found at residues 653 to 716 (IAEV…KKQL), 727 to 790 (SFTV…QKEL), 800 to 863 (VVED…KKRI), 873 to 967 (QVTL…KEAL), 972 to 1034 (PVTI…KAGL), 1052 to 1117 (SFKL…RDAI), and 1127 to 1190 (MVSE…IDHI). A disordered region spans residues 910-946 (PDREENPVHSVEPSIQENGDEAGEGREAKETDPGSPR). The segment covering 932–946 (GEGREAKETDPGSPR) has biased composition (basic and acidic residues). Lys991 bears the N6-acetyllysine mark. Residues 1214–1268 (PAHEESKAPSKGFVVRDAPWTSNSSEKAPDMSSSEEIPTFGAQVAPKTLPWGPKR) are disordered. Residues 1233–1249 (WTSNSSEKAPDMSSSEE) show a composition bias toward polar residues. Ser1247 bears the Phosphoserine mark.

It localises to the cytoplasm. The protein resides in the nucleus. Its function is as follows. Appears to play a role in cell sterol metabolism. It may function to protect cells from over-accumulation of cholesterol. In Rattus norvegicus (Rat), this protein is Vigilin (Hdlbp).